The primary structure comprises 204 residues: MGSAEPISAIATFENVSLADQTCLHGEDCDKLRKNFEECLKLKGVPEDNLGIALGLCLYSCATIGTSNKVNVQPTSTFIKASFGGGKELYLTHGELNSFLGSQKLLEGKPNKLRCFCRTFQKDYISLRKEYRGKLPPIARANRHGLPAEDHYLAADFISTSTELTDLQQSRLLLARENATHTEFSSESPVTSLKQLGRGLGTGR.

The span at 183–194 (EFSSESPVTSLK) shows a compositional bias: polar residues. A disordered region spans residues 183–204 (EFSSESPVTSLKQLGRGLGTGR).

This sequence belongs to the closteroviridae capsid protein family.

The protein resides in the virion. Its function is as follows. Component that constitutes the body part of the virion. Also acts as a movement protein that is involved in local cell-cell movement via plamodesmata. At least five viral proteins, CP, CPm, p6, p64 and Hsp70h are essential for cell-cell movement. In Beet yellows virus (isolate Ukraine) (BYV), this protein is Capsid protein.